The primary structure comprises 279 residues: Oxygen-dependent coproporphyrinogen-III oxidase (279 aa).

Substrate is bound at residue serine 102. The a divalent metal cation site is built by histidine 106 and histidine 116. Histidine 116 serves as the catalytic Proton donor. Residue 118–120 participates in substrate binding; it reads NTR. The a divalent metal cation site is built by histidine 149 and histidine 179. Residues 244–279 are important for dimerization; that stretch reads YVEFNLLYDRGTKFGLMTDGNVEAILMSLPPVVKFN.

This sequence belongs to the aerobic coproporphyrinogen-III oxidase family. In terms of assembly, homodimer. Requires a divalent metal cation as cofactor.

It is found in the cytoplasm. It carries out the reaction coproporphyrinogen III + O2 + 2 H(+) = protoporphyrinogen IX + 2 CO2 + 2 H2O. The protein operates within porphyrin-containing compound metabolism; protoporphyrin-IX biosynthesis; protoporphyrinogen-IX from coproporphyrinogen-III (O2 route): step 1/1. Its function is as follows. Involved in the heme biosynthesis. Catalyzes the aerobic oxidative decarboxylation of propionate groups of rings A and B of coproporphyrinogen-III to yield the vinyl groups in protoporphyrinogen-IX. The polypeptide is Oxygen-dependent coproporphyrinogen-III oxidase (Rickettsia prowazekii (strain Madrid E)).